Reading from the N-terminus, the 718-residue chain is Effector protein hopM1 (718 aa).

Residues 1-10 (MIGTRVGGSG) show a composition bias toward gly residues. Disordered regions lie at residues 1-63 (MIGT…ARLP) and 683-718 (GVSSLRDAHKPAETSSPTADDAAAVELTAMEEGRRR). The segment covering 11–22 (STEIVQANQPQP) has biased composition (polar residues). Residues 44–60 (ASQSAAQAPESSAAGAA) show a composition bias toward low complexity.

As to quaternary structure, interacts with the chaperone ShcM.

The protein localises to the secreted. Its subcellular location is the host membrane. Its function is as follows. Involved in the suppression of basal resistance and promotion of disease symptoms in plants. May be involved in the inhibition of a host vesicle trafficking pathway. The polypeptide is Effector protein hopM1 (hopM1) (Pseudomonas syringae pv. syringae (strain B728a)).